A 200-amino-acid chain; its full sequence is Probable nicotinate-nucleotide adenylyltransferase (200 aa).

It belongs to the NadD family.

The catalysed reaction is nicotinate beta-D-ribonucleotide + ATP + H(+) = deamido-NAD(+) + diphosphate. It participates in cofactor biosynthesis; NAD(+) biosynthesis; deamido-NAD(+) from nicotinate D-ribonucleotide: step 1/1. Its function is as follows. Catalyzes the reversible adenylation of nicotinate mononucleotide (NaMN) to nicotinic acid adenine dinucleotide (NaAD). The protein is Probable nicotinate-nucleotide adenylyltransferase of Leifsonia xyli subsp. xyli (strain CTCB07).